Reading from the N-terminus, the 236-residue chain is Small ribosomal subunit protein uS2 (236 aa).

The protein belongs to the universal ribosomal protein uS2 family.

This chain is Small ribosomal subunit protein uS2, found in Brevibacillus brevis (strain 47 / JCM 6285 / NBRC 100599).